Consider the following 458-residue polypeptide: tRNA modification GTPase MnmE (458 aa).

Positions 28, 85, and 124 each coordinate (6S)-5-formyl-5,6,7,8-tetrahydrofolate. The TrmE-type G domain maps to 220–381; the sequence is GMNVVIAGRP…LKEHLKAVMG (162 aa). Asparagine 230 lines the K(+) pocket. GTP contacts are provided by residues 230–235, 249–255, and 274–277; these read NAGKSS, TDIEGTT, and DTAG. Serine 234 contributes to the Mg(2+) binding site. 3 residues coordinate K(+): threonine 249, isoleucine 251, and threonine 254. Threonine 255 serves as a coordination point for Mg(2+). Lysine 458 is a (6S)-5-formyl-5,6,7,8-tetrahydrofolate binding site.

It belongs to the TRAFAC class TrmE-Era-EngA-EngB-Septin-like GTPase superfamily. TrmE GTPase family. Homodimer. Heterotetramer of two MnmE and two MnmG subunits. The cofactor is K(+).

It is found in the cytoplasm. Exhibits a very high intrinsic GTPase hydrolysis rate. Involved in the addition of a carboxymethylaminomethyl (cmnm) group at the wobble position (U34) of certain tRNAs, forming tRNA-cmnm(5)s(2)U34. The protein is tRNA modification GTPase MnmE of Chromohalobacter salexigens (strain ATCC BAA-138 / DSM 3043 / CIP 106854 / NCIMB 13768 / 1H11).